Reading from the N-terminus, the 239-residue chain is Ribonuclease 3 (239 aa).

In terms of domain architecture, RNase III spans 12-137 (RAKLEALIGH…LIAAIYLDGG (126 aa)). A Mg(2+)-binding site is contributed by E50. The active site involves D54. Residues D123 and E126 each contribute to the Mg(2+) site. E126 is a catalytic residue. Residues 162-231 (DAKTELQEWS…ATKMLEREGI (70 aa)) form the DRBM domain.

It belongs to the ribonuclease III family. In terms of assembly, homodimer. The cofactor is Mg(2+).

Its subcellular location is the cytoplasm. The enzyme catalyses Endonucleolytic cleavage to 5'-phosphomonoester.. In terms of biological role, digests double-stranded RNA. Involved in the processing of primary rRNA transcript to yield the immediate precursors to the large and small rRNAs (23S and 16S). Processes some mRNAs, and tRNAs when they are encoded in the rRNA operon. Processes pre-crRNA and tracrRNA of type II CRISPR loci if present in the organism. The polypeptide is Ribonuclease 3 (Rhizobium etli (strain ATCC 51251 / DSM 11541 / JCM 21823 / NBRC 15573 / CFN 42)).